A 679-amino-acid chain; its full sequence is Altered inheritance of mitochondria protein 21 (679 aa).

Residues 1 to 85 (MPSEVTPKVP…LQRPVRRSTT (85 aa)) form a disordered region. Basic and acidic residues predominate over residues 9–19 (VPERPSRRKTS). Phosphothreonine is present on threonine 18. Serine 36 is subject to Phosphoserine. Threonine 58 is modified (phosphothreonine). Residue serine 70 is modified to Phosphoserine. Threonine 85 bears the Phosphothreonine mark. The residue at position 104 (serine 104) is a Phosphoserine. Positions 110-119 (NIHNVSRKKS) are enriched in basic residues. Disordered stretches follow at residues 110–522 (NIHN…EKIE), 549–580 (IDTTPGEQAERALDEKSKSIPEEQREQSPNKM), and 593–679 (EKLP…FHSL). Polar residues-rich tracts occupy residues 133 to 149 (QNGQRSASDNKTSTNPS) and 164 to 178 (SAISPSNLVNKSNNE). Residues 179-213 (VTEHSDSEDLTEKQKVHAALDNEAGDRSHFEEKLI) are compositionally biased toward basic and acidic residues. 3 positions are modified to phosphoserine: serine 183, serine 206, and serine 231. Basic and acidic residues predominate over residues 243 to 272 (SDDKAEKFTKHPESSLEELQKHQEQQEEKI). Threonine 277 carries the phosphothreonine modification. A Phosphoserine modification is found at serine 284. Polar residues predominate over residues 296 to 323 (EVNSQPQGPSDTETVIAATSSNVPSQIA). Serine 324 carries the phosphoserine modification. 2 stretches are compositionally biased toward basic and acidic residues: residues 339 to 361 (KKDFEAHVQKEELPNTQEKRVSE) and 372 to 383 (EESKIPKIPSER). The interval 383 to 396 (RPKRRAPPPVPKKP) is interaction with SH3 domain of ABP1. Composition is skewed to polar residues over residues 414-427 (DLHNNGNSSATTAS) and 437-452 (SSITSDTTKADFTSKL). Basic and acidic residues predominate over residues 471–482 (LEKKLSSPDTES). A compositionally biased stretch (basic residues) spans 501-512 (RRGRGPRGRKLP). Residue threonine 552 is modified to Phosphothreonine. Residues 556-576 (QAERALDEKSKSIPEEQREQS) are compositionally biased toward basic and acidic residues. Serine 576 carries the phosphoserine modification. Residues 603–613 (PLSQLPQTNAV) show a composition bias toward polar residues. Residues serine 620, serine 623, serine 625, serine 627, serine 667, serine 671, serine 675, and serine 678 each carry the phosphoserine modification. Residues 667–679 (SALHSEEASFHSL) are compositionally biased toward basic and acidic residues.

This sequence belongs to the AIM21 family. In terms of assembly, interacts with ribosomes. Interacts with ABP1.

It is found in the cytoplasm. The protein localises to the cytoskeleton. Its subcellular location is the actin patch. In terms of biological role, involved in mitochondrial migration along actin filaments. In Saccharomyces cerevisiae (strain ATCC 204508 / S288c) (Baker's yeast), this protein is Altered inheritance of mitochondria protein 21 (AIM21).